We begin with the raw amino-acid sequence, 434 residues long: Beta-enolase (434 aa).

Ala-2 is modified (N-acetylalanine). The residue at position 72 (Thr-72) is a Phosphothreonine. Ser-83 and Ser-157 each carry phosphoserine. 2 residues coordinate substrate: His-158 and Glu-167. Ser-176 bears the Phosphoserine mark. Thr-205 carries the post-translational modification Phosphothreonine. Residue Glu-210 is the Proton donor of the active site. At Thr-229 the chain carries Phosphothreonine. Tyr-236 bears the Phosphotyrosine mark. Asp-245 is a Mg(2+) binding site. At Ser-263 the chain carries Phosphoserine. Residues Glu-293 and Asp-318 each contribute to the substrate site. Glu-293 and Asp-318 together coordinate Mg(2+). Lys-343 serves as the catalytic Proton acceptor. Substrate is bound by residues Ser-370–Ser-373 and Lys-394.

Belongs to the enolase family. Mammalian enolase is composed of 3 isozyme subunits, alpha, beta and gamma, which can form homodimers or heterodimers which are cell-type and development-specific. Interacts with PNKD. It depends on Mg(2+) as a cofactor. The alpha/alpha homodimer is expressed in embryo and in most adult tissues. The alpha/beta heterodimer and the beta/beta homodimer are found in striated muscle, and the alpha/gamma heterodimer and the gamma/gamma homodimer in neurons.

It localises to the cytoplasm. The catalysed reaction is (2R)-2-phosphoglycerate = phosphoenolpyruvate + H2O. It participates in carbohydrate degradation; glycolysis; pyruvate from D-glyceraldehyde 3-phosphate: step 4/5. Its function is as follows. Glycolytic enzyme that catalyzes the conversion of 2-phosphoglycerate to phosphoenolpyruvate. Appears to have a function in striated muscle development and regeneration. In Rattus norvegicus (Rat), this protein is Beta-enolase (Eno3).